A 215-amino-acid polypeptide reads, in one-letter code: 3,4-dihydroxy-2-butanone 4-phosphate synthase (215 aa).

D-ribulose 5-phosphate is bound by residues 38 to 39 (RE), D43, 151 to 155 (RRGHT), and E175. Residue E39 participates in Mg(2+) binding. H154 contributes to the Mg(2+) binding site.

It belongs to the DHBP synthase family. As to quaternary structure, homodimer. Mg(2+) serves as cofactor. It depends on Mn(2+) as a cofactor.

The catalysed reaction is D-ribulose 5-phosphate = (2S)-2-hydroxy-3-oxobutyl phosphate + formate + H(+). Its pathway is cofactor biosynthesis; riboflavin biosynthesis; 2-hydroxy-3-oxobutyl phosphate from D-ribulose 5-phosphate: step 1/1. Catalyzes the conversion of D-ribulose 5-phosphate to formate and 3,4-dihydroxy-2-butanone 4-phosphate. This Haemophilus influenzae (strain ATCC 51907 / DSM 11121 / KW20 / Rd) protein is 3,4-dihydroxy-2-butanone 4-phosphate synthase.